Consider the following 769-residue polypeptide: Homoaconitase, mitochondrial (769 aa).

The N-terminal 28 residues, 1 to 28, are a transit peptide targeting the mitochondrion; sequence MQSRLLPSGPGRRWISLRVPNTPQRRAF. [4Fe-4S] cluster contacts are provided by Cys-391, Cys-460, and Cys-463.

It belongs to the aconitase/IPM isomerase family. [4Fe-4S] cluster serves as cofactor.

It is found in the mitochondrion. The enzyme catalyses (2R,3S)-homoisocitrate = cis-homoaconitate + H2O. The protein operates within amino-acid biosynthesis; L-lysine biosynthesis via AAA pathway; L-alpha-aminoadipate from 2-oxoglutarate: step 3/5. Its function is as follows. Catalyzes the reversible hydration of cis-homoaconitate to (2R,3S)-homoisocitrate, a step in the alpha-aminoadipate pathway for lysine biosynthesis. The polypeptide is Homoaconitase, mitochondrial (lysA) (Aspergillus niger (strain ATCC MYA-4892 / CBS 513.88 / FGSC A1513)).